The primary structure comprises 417 residues: Serine hydroxymethyltransferase (417 aa).

(6S)-5,6,7,8-tetrahydrofolate-binding positions include Leu121 and 125–127 (GHL). Lys229 carries the N6-(pyridoxal phosphate)lysine modification. A (6S)-5,6,7,8-tetrahydrofolate-binding site is contributed by 355 to 357 (SPF).

The protein belongs to the SHMT family. In terms of assembly, homodimer. Pyridoxal 5'-phosphate serves as cofactor.

The protein localises to the cytoplasm. The enzyme catalyses (6R)-5,10-methylene-5,6,7,8-tetrahydrofolate + glycine + H2O = (6S)-5,6,7,8-tetrahydrofolate + L-serine. It functions in the pathway one-carbon metabolism; tetrahydrofolate interconversion. It participates in amino-acid biosynthesis; glycine biosynthesis; glycine from L-serine: step 1/1. Its function is as follows. Catalyzes the reversible interconversion of serine and glycine with tetrahydrofolate (THF) serving as the one-carbon carrier. This reaction serves as the major source of one-carbon groups required for the biosynthesis of purines, thymidylate, methionine, and other important biomolecules. Also exhibits THF-independent aldolase activity toward beta-hydroxyamino acids, producing glycine and aldehydes, via a retro-aldol mechanism. The polypeptide is Serine hydroxymethyltransferase (Shewanella amazonensis (strain ATCC BAA-1098 / SB2B)).